The following is a 278-amino-acid chain: Large ribosomal subunit protein uL2 (278 aa).

The interval 222–278 (GVVMNPVDHPHGGGEGRTSGGRHPVTPWGKPTKGAKTRKNKSTDKFIIRSRHERKKR) is disordered. Over residues 269–278 (IRSRHERKKR) the composition is skewed to basic residues.

The protein belongs to the universal ribosomal protein uL2 family. Part of the 50S ribosomal subunit. Forms a bridge to the 30S subunit in the 70S ribosome.

Functionally, one of the primary rRNA binding proteins. Required for association of the 30S and 50S subunits to form the 70S ribosome, for tRNA binding and peptide bond formation. It has been suggested to have peptidyltransferase activity; this is somewhat controversial. Makes several contacts with the 16S rRNA in the 70S ribosome. This chain is Large ribosomal subunit protein uL2, found in Maricaulis maris (strain MCS10) (Caulobacter maris).